The primary structure comprises 153 residues: MAKITGNLVATGLKFGIVTARFNDFINDKLLSGAIDTLVRHGADENNIDTAWVPGAFEIPLVAKKMATSGKYDAVICLGTVIRGSTTHYDYVCNEAAKGIGAVALETGVPVIFGVLTTENIEQAIERAGTKAGNKGSECALGAIEIVNVLKAI.

Residues Phe-22, 56–58, and 80–82 contribute to the 5-amino-6-(D-ribitylamino)uracil site; these read AFE and TVI. (2S)-2-hydroxy-3-oxobutyl phosphate is bound at residue 85 to 86; that stretch reads ST. His-88 acts as the Proton donor in catalysis. 5-amino-6-(D-ribitylamino)uracil is bound at residue Phe-113. Arg-127 contacts (2S)-2-hydroxy-3-oxobutyl phosphate.

Belongs to the DMRL synthase family. As to quaternary structure, forms an icosahedral capsid composed of 60 subunits, arranged as a dodecamer of pentamers.

It carries out the reaction (2S)-2-hydroxy-3-oxobutyl phosphate + 5-amino-6-(D-ribitylamino)uracil = 6,7-dimethyl-8-(1-D-ribityl)lumazine + phosphate + 2 H2O + H(+). The protein operates within cofactor biosynthesis; riboflavin biosynthesis; riboflavin from 2-hydroxy-3-oxobutyl phosphate and 5-amino-6-(D-ribitylamino)uracil: step 1/2. Catalyzes the formation of 6,7-dimethyl-8-ribityllumazine by condensation of 5-amino-6-(D-ribitylamino)uracil with 3,4-dihydroxy-2-butanone 4-phosphate. This is the penultimate step in the biosynthesis of riboflavin. The chain is 6,7-dimethyl-8-ribityllumazine synthase from Actinobacillus pleuropneumoniae serotype 3 (strain JL03).